The following is a 108-amino-acid chain: Zinc metalloproteinase/disintegrin (108 aa).

Residues 1 to 19 (NEYQTYLTDRNPQCILNEP) enclose the Peptidase M12B domain. The propeptide occupies 20–35 (LRTDTVSTPVSGNELL). In terms of domain architecture, Disintegrin spans 27 to 108 (TPVSGNELLE…ADCPRNGFYG (82 aa)). 6 cysteine pairs are disulfide-bonded: cysteine 41/cysteine 56, cysteine 43/cysteine 51, cysteine 50/cysteine 73, cysteine 64/cysteine 70, cysteine 69/cysteine 94, and cysteine 82/cysteine 101. The short motif at 86–88 (KGD) is the Cell attachment site; atypical (KGD) element.

It belongs to the venom metalloproteinase (M12B) family. P-II subfamily. P-IIa sub-subfamily. Monomeric (disintegrin). It depends on Zn(2+) as a cofactor. As to expression, expressed by the venom gland.

The protein resides in the secreted. Its function is as follows. Impairs hemostasis in the envenomed animal. Inhibits platelet aggregation induced by ADP, thrombin, platelet-activating factor and collagen. Acts by inhibiting fibrinogen interaction with platelet receptors GPIIb/GPIIIa (ITGA2B/ITGB3). This is Zinc metalloproteinase/disintegrin from Gloydius brevicauda (Korean slamosa snake).